Reading from the N-terminus, the 167-residue chain is Glutathione peroxidase-like peroxiredoxin 1 (167 aa).

Cys-36 serves as the catalytic Cysteine sulfenic acid (-SOH) intermediate. A disulfide bond links Cys-36 and Cys-82.

Belongs to the glutathione peroxidase family. As to quaternary structure, monomer.

The protein resides in the peroxisome matrix. It localises to the mitochondrion outer membrane. The catalysed reaction is 2 glutathione + H2O2 = glutathione disulfide + 2 H2O. The enzyme catalyses a hydroperoxide + [thioredoxin]-dithiol = an alcohol + [thioredoxin]-disulfide + H2O. In terms of biological role, glutathione peroxidase-like protein that protects cells from phospholipid hydroperoxides and nonphospholipid peroxides during oxidative stress. Has peroxidase activity using thioredoxin or glutathione as a reducing power. Involved in peroxisome formation. In Saccharomyces cerevisiae (strain ATCC 204508 / S288c) (Baker's yeast), this protein is Glutathione peroxidase-like peroxiredoxin 1.